The chain runs to 610 residues: Putative sensor histidine kinase NtrY-like (610 aa).

A run of 4 helical transmembrane segments spans residues 18–38, 49–69, 92–112, and 292–312; these read IGIL…TISI, KVIW…ILLT, IVVA…ISSA, and IIFI…GVIV. The region spanning 314 to 368 is the HAMP domain; the sequence is AKIVNPIKKLVIATDKVKSGDLTVQVPENEVDKDEIGTLYAAFNRMIKQLSRQQR. A Histidine kinase domain is found at 385-596; sequence KVAHEIKNPL…VIDIRFNLEE (212 aa). His-388 is subject to Phosphohistidine; by autocatalysis.

The protein localises to the cell membrane. The enzyme catalyses ATP + protein L-histidine = ADP + protein N-phospho-L-histidine.. Functionally, member of the two-component regulatory system RBE_0470/RBE_0312. The protein is Putative sensor histidine kinase NtrY-like of Rickettsia bellii (strain RML369-C).